A 529-amino-acid polypeptide reads, in one-letter code: Mitochondrial inner membrane magnesium transporter MIT1 (529 aa).

Coiled-coil stretches lie at residues 336 to 388 (KIQL…LKNE) and 416 to 450 (LLET…LNLD). A helical transmembrane segment spans residues 456-476 (FILLNAKISFSTLFCSICAVI). The Mitochondrial intermembrane segment spans residues 477–492 (TSLFGMNLKNFIEHND). Residues 493-513 (YAFFIVSIFITSWSIVGIYFT) form a helical membrane-spanning segment. The Mitochondrial matrix segment spans residues 514 to 529 (KNINTLLRFFDKYNVK).

Belongs to the CorA metal ion transporter (MIT) (TC 1.A.35) family.

It is found in the mitochondrion inner membrane. Functionally, mitochondrial inner membrane magnesium transporter required for mitochondrial magnesium homeostasis. Involved in the development of the sporozoite in the mosquito vector midgut. The sequence is that of Mitochondrial inner membrane magnesium transporter MIT1 from Plasmodium falciparum (isolate 3D7).